The chain runs to 346 residues: tRNA N6-adenosine threonylcarbamoyltransferase (346 aa).

The Fe cation site is built by His110 and His114. Residues 132–136 (LLSGG), Asp165, Gly178, and Asn274 each bind substrate. Asp298 is a Fe cation binding site.

The protein belongs to the KAE1 / TsaD family. The cofactor is Fe(2+).

Its subcellular location is the cytoplasm. The enzyme catalyses L-threonylcarbamoyladenylate + adenosine(37) in tRNA = N(6)-L-threonylcarbamoyladenosine(37) in tRNA + AMP + H(+). Functionally, required for the formation of a threonylcarbamoyl group on adenosine at position 37 (t(6)A37) in tRNAs that read codons beginning with adenine. Is involved in the transfer of the threonylcarbamoyl moiety of threonylcarbamoyl-AMP (TC-AMP) to the N6 group of A37, together with TsaE and TsaB. TsaD likely plays a direct catalytic role in this reaction. This chain is tRNA N6-adenosine threonylcarbamoyltransferase, found in Borreliella burgdorferi (strain ZS7) (Borrelia burgdorferi).